Reading from the N-terminus, the 408-residue chain is Peptidase T (408 aa).

Residue H78 coordinates Zn(2+). D80 is a catalytic residue. D140 contacts Zn(2+). E173 acts as the Proton acceptor in catalysis. Zn(2+)-binding residues include E174, D196, and H379.

It belongs to the peptidase M20B family. Zn(2+) is required as a cofactor.

The protein resides in the cytoplasm. The catalysed reaction is Release of the N-terminal residue from a tripeptide.. Cleaves the N-terminal amino acid of tripeptides. This is Peptidase T from Shigella boydii serotype 18 (strain CDC 3083-94 / BS512).